The primary structure comprises 85 residues: Acyl carrier protein (85 aa).

In terms of domain architecture, Carrier spans 2–78; the sequence is SQISERVIDL…DAIAYIESHA (77 aa). Residue S37 is modified to O-(pantetheine 4'-phosphoryl)serine.

The protein belongs to the acyl carrier protein (ACP) family. In terms of processing, 4'-phosphopantetheine is transferred from CoA to a specific serine of apo-ACP by AcpS. This modification is essential for activity because fatty acids are bound in thioester linkage to the sulfhydryl of the prosthetic group.

The protein resides in the cytoplasm. Its pathway is lipid metabolism; fatty acid biosynthesis. Carrier of the growing fatty acid chain in fatty acid biosynthesis. In Azobacteroides pseudotrichonymphae genomovar. CFP2, this protein is Acyl carrier protein.